The sequence spans 523 residues: MSDPVIKRALVSVSDKTGIVDFCRELASMGVEIFSTGGTLKALQDAGIAAESISTITGFPEIMDGRVKTLHPKIHGGLLAVRDNAEHQQAARENGIEFIDLVAVNLYPFEATIAKADVSFEEAIENIDIGGPSMLRSAAKNNESVTVITDAADYATVLDEMKSNGGATTRTTRLTLAAKVYALTSRYDTAIAAYMAKAAGVEGANDTMTVKLEKELGMRYGENPHQSAGLYKMDDGNGTRSFGAIFEKLHGKELSYNNMLDIAAATGIIEEFRGEEPSVVIVKHTNPCGVAQAPTLCEAYRKAFSTDTQAPFGGIIAFNRPLDMETANAVNEIFTEILIAPAFEEGVLDLLMKKKDRRLVLQKQPLPKAGWEFKSTPFGMLVQERDSKMVAPEELKVVTKRQPTEEELADLMFAWKIARHIKSNTILYVKNRQTFGVGAGQMSRVDSSKIARWKASEVGLDLKGSVVASDAFFPFADGLLAAAEAGVTAVIQPGGSIRDNEVIEAADANNLAMVFTGMRHFKH.

Positions 1 to 149 (MSDPVIKRAL…KNNESVTVIT (149 aa)) constitute an MGS-like domain.

It belongs to the PurH family.

It catalyses the reaction (6R)-10-formyltetrahydrofolate + 5-amino-1-(5-phospho-beta-D-ribosyl)imidazole-4-carboxamide = 5-formamido-1-(5-phospho-D-ribosyl)imidazole-4-carboxamide + (6S)-5,6,7,8-tetrahydrofolate. It carries out the reaction IMP + H2O = 5-formamido-1-(5-phospho-D-ribosyl)imidazole-4-carboxamide. Its pathway is purine metabolism; IMP biosynthesis via de novo pathway; 5-formamido-1-(5-phospho-D-ribosyl)imidazole-4-carboxamide from 5-amino-1-(5-phospho-D-ribosyl)imidazole-4-carboxamide (10-formyl THF route): step 1/1. It participates in purine metabolism; IMP biosynthesis via de novo pathway; IMP from 5-formamido-1-(5-phospho-D-ribosyl)imidazole-4-carboxamide: step 1/1. The protein is Bifunctional purine biosynthesis protein PurH of Chlorobaculum parvum (strain DSM 263 / NCIMB 8327) (Chlorobium vibrioforme subsp. thiosulfatophilum).